The primary structure comprises 255 residues: MAHLMTVQLLLLVMWMAECAQSRATRARTELLNVCMDAKHHKEKPGPEDNLHDQCSPWKTNSCCSTNTSQEAHKDISYLYRFNWNHCGTMTSECKRHFIQDTCLYECSPNLGPWIQQVDQSWRKERILDVPLCKEDCQQWWEDCQSSFTCKSNWHKGWNWSSGHNECPVGASCHPFTFYFPTSAALCEEIWSHSYKLSNYSRGSGRCIQMWFDPAQGNPNEEVARFYAEAMSGAGFHGTWPLLCSLSLVLLWVIS.

The first 24 residues, 1–24 (MAHLMTVQLLLLVMWMAECAQSRA), serve as a signal peptide directing secretion. Disulfide bonds link C35–C63, C55–C103, C64–C107, C87–C173, C94–C144, C133–C207, C137–C187, and C150–C167. An N-linked (GlcNAc...) asparagine glycan is attached at N67. Residues D101, Y105, 122–126 (WRKER), 155–160 (HKGWNW), and S194 contribute to the folate site. N-linked (GlcNAc...) asparagine glycosylation is present at N159. N-linked (GlcNAc...) asparagine glycosylation is present at N199. S232 carries the GPI-anchor amidated serine lipid modification. The propeptide at 233-255 (GAGFHGTWPLLCSLSLVLLWVIS) is removed in mature form.

The protein belongs to the folate receptor family. Post-translationally, the secreted form is derived from the membrane-bound form either by cleavage of the GPI anchor, or/and by proteolysis catalyzed by a metalloprotease. Detected in kidney proximal tubules (at protein level).

The protein resides in the cell membrane. It localises to the apical cell membrane. Its subcellular location is the basolateral cell membrane. It is found in the secreted. The protein localises to the cytoplasmic vesicle. The protein resides in the clathrin-coated vesicle. It localises to the endosome. Its function is as follows. Binds to folate and reduced folic acid derivatives and mediates delivery of 5-methyltetrahydrofolate and folate analogs into the interior of cells. Has high affinity for folate and folic acid analogs at neutral pH. Exposure to slightly acidic pH after receptor endocytosis triggers a conformation change that strongly reduces its affinity for folates and mediates their release. Required for normal embryonic development and normal cell proliferation. Required for renal folate reabsorption. The polypeptide is Folate receptor alpha (Folr1) (Mus musculus (Mouse)).